The sequence spans 577 residues: Proline--tRNA ligase (577 aa).

The protein belongs to the class-II aminoacyl-tRNA synthetase family. ProS type 1 subfamily. Homodimer.

It localises to the cytoplasm. The enzyme catalyses tRNA(Pro) + L-proline + ATP = L-prolyl-tRNA(Pro) + AMP + diphosphate. Functionally, catalyzes the attachment of proline to tRNA(Pro) in a two-step reaction: proline is first activated by ATP to form Pro-AMP and then transferred to the acceptor end of tRNA(Pro). As ProRS can inadvertently accommodate and process non-cognate amino acids such as alanine and cysteine, to avoid such errors it has two additional distinct editing activities against alanine. One activity is designated as 'pretransfer' editing and involves the tRNA(Pro)-independent hydrolysis of activated Ala-AMP. The other activity is designated 'posttransfer' editing and involves deacylation of mischarged Ala-tRNA(Pro). The misacylated Cys-tRNA(Pro) is not edited by ProRS. The protein is Proline--tRNA ligase of Helicobacter pylori (strain G27).